Reading from the N-terminus, the 233-residue chain is Clathrin light chain (233 aa).

The disordered stretch occupies residues 1–124 (MSEKFPPLED…EDRSEVVDQW (124 aa)). Over residues 17–43 (PNDKKDDDTDFLKREAEILGDEFKTEQ) the composition is skewed to basic and acidic residues. Thr-49 bears the Phosphothreonine mark. Ser-52 carries the post-translational modification Phosphoserine. The segment covering 56 to 67 (DDDEIRDFEEQF) has biased composition (acidic residues). Over residues 69–92 (DINSANGAVSSDQNGSATVSSGND) the composition is skewed to polar residues. Over residues 112 to 124 (SVKEDRSEVVDQW) the composition is skewed to basic and acidic residues. The stretch at 125–186 (KQRRAVEIHE…EAFLKKRDEF (62 aa)) forms a coiled coil. Positions 144 to 204 (KELQDEAIKH…DRALQLINQD (61 aa)) are involved in binding clathrin heavy chain.

Belongs to the clathrin light chain family. As to quaternary structure, clathrin coats are formed from molecules containing 3 heavy chains and 3 light chains. Interacts with the auxilin-like clathrin uncoating factor SWA2.

Its subcellular location is the cytoplasmic vesicle membrane. The protein resides in the membrane. It localises to the coated pit. Clathrin is the major protein of the polyhedral coat of coated pits and vesicles. In yeast, it is involved in the retention of proteins in an intracellular membrane compartment, presumably the trans-Golgi. The yeast light chain is important for cell growth. The light chain may help to properly orient the assembly/ disassembly of the clathrin coats. This Saccharomyces cerevisiae (strain ATCC 204508 / S288c) (Baker's yeast) protein is Clathrin light chain (CLC1).